We begin with the raw amino-acid sequence, 197 residues long: MKKALFLILDQYADWEGVYLASALNQREDWSVHTVSLDPIVSSIGGFKTSVDYIIGLEPANFNLLVMIGGDSWSNDNKKLLHFVKTAFQKNIPIAAICGAVDFLAKNGLLNNHSHTGNFVYLWKDYKQYKPISSFVEKQAVRDKNLVTANGTAPIEFTNLILEMIDFDTPENIEKMMYMNRYGFYHFCDKYGNPFVD.

In terms of domain architecture, PfpI endopeptidase spans 29-166 (DWSVHTVSLD…FTNLILEMID (138 aa)). Cys-98 acts as the Nucleophile in catalysis.

It belongs to the peptidase C56 family.

This is an uncharacterized protein from Bacillus subtilis (strain 168).